Consider the following 668-residue polypeptide: WD repeat-containing protein 48 homolog (668 aa).

8 WD repeats span residues 26-65 (QHRN…SEKY), 71-110 (HHND…CMST), 113-152 (THRD…ALTA), 164-203 (GSKD…RRMK), 206-245 (GHTE…CVQT), 248-287 (VHKE…NKTL), 290-329 (EEQA…RCTL), and 350-389 (KGGA…KKEQ). Positions 592–616 (ETTPSGGNANNSLQNSQSDANSEGS) are disordered.

This sequence belongs to the WD repeat WDR48 family. In terms of assembly, catalytic component of the Usp12-46 deubiquitylase complex consisting of Usp12-46, Wdr20 and Uaf1; regulatory subunit that, together wtih Wdr20, stabilizes Usp12-46. The Usp12-46 deubiquitylase complex associates with arr/arrow; the interaction leads to deubiquitination and stabilization of arr/arrow.

Regulatory component of the Usp12-46 deubiquitylase complex. activates deubiquitination by increasing the catalytic turnover without increasing the affinity of deubiquitinating enzymes for the substrate. The complex deubiquitylates the wg/wingless-signaling receptor arr/arrow, which stabilizes the receptor and increases its concentration at the cell surface; this enhances the sensitivity of cells to wg/wingless-signal stimulation. This increases the amplitude and spatial range of the signaling response to the wg/wingless morphogen gradient, facilitating the precise concentration-dependent regulation of its target genes. Together with Wdr20 and Usp12-46 required for wg/wingless-mediated signaling in the wing imaginal disc and for wg/wingless-dependent regulation of intestinal stem cell proliferation. This is WD repeat-containing protein 48 homolog from Drosophila melanogaster (Fruit fly).